We begin with the raw amino-acid sequence, 432 residues long: Isocitrate lyase (432 aa).

The disordered stretch occupies residues 1–24; sequence MSNVGKPRTAQEIQQDWDTNPRWN. Over residues 11-22 the composition is skewed to polar residues; it reads QEIQQDWDTNPR. Residue 93-95 coordinates substrate; that stretch reads SGW. Position 155 (D155) interacts with Mg(2+). Residue C193 is the Proton acceptor of the active site. Residues 194–195, R230, 315–319, and T349 contribute to the substrate site; these read GH and NCSPS.

The protein belongs to the isocitrate lyase/PEP mutase superfamily. Isocitrate lyase family. In terms of assembly, homotetramer. Mg(2+) serves as cofactor.

It catalyses the reaction D-threo-isocitrate = glyoxylate + succinate. Its pathway is carbohydrate metabolism; glyoxylate cycle; (S)-malate from isocitrate: step 1/2. Its activity is regulated as follows. Inhibited by 3-phosphoglycerate, 6-phosphogluconate, phosphoenolpyruvate (PEP), fructose 1,6-bisphosphate, glycolate, oxalate, and itaconate. In terms of biological role, involved in the metabolic adaptation in response to environmental changes. Catalyzes the reversible formation of succinate and glyoxylate from isocitrate, a key step of the glyoxylate cycle, which operates as an anaplerotic route for replenishing the tricarboxylic acid cycle during growth on fatty acid substrates. The chain is Isocitrate lyase from Corynebacterium glutamicum (strain ATCC 13032 / DSM 20300 / JCM 1318 / BCRC 11384 / CCUG 27702 / LMG 3730 / NBRC 12168 / NCIMB 10025 / NRRL B-2784 / 534).